Here is a 288-residue protein sequence, read N- to C-terminus: MRSEKEVYDIVLNFAKTDKRIRMVTLEGSRTNTNIPPDDFQDFDITFFVTDMDSFTSDDKWLDIFGERLILQKPEDMELFPAVEKGFSYLMLFTDDVKIDLTLLPLELIDEYFTWDKLVKLLLDKDNRIVKPPIPTDIDYHLQKPTQRMFDDCCNEFWNTTTYVVKGLCRKEILFAIDHMNDIVRKELLRMISWLIGIKQGFHFSLGKNYKFMKQYVPEELWERLMSTYNMDSYPHMWESFEQCMALFREVSSEVACQLDYQYPLYDEKISNYVIRQKKKYGIEDDNK.

It catalyses the reaction streptomycin + ATP = 6-O-adenylylstreptomycin + diphosphate. Functionally, mediates bacterial resistance to streptomycin, is probably a streptomycin 6-adenylyltransferase. This chain is Aminoglycoside 6-adenylyltransferase, found in Campylobacter jejuni.